Reading from the N-terminus, the 61-residue chain is Large ribosomal subunit protein uL30 (61 aa).

The protein belongs to the universal ribosomal protein uL30 family. As to quaternary structure, part of the 50S ribosomal subunit.

In Shewanella halifaxensis (strain HAW-EB4), this protein is Large ribosomal subunit protein uL30.